The following is a 234-amino-acid chain: Probable chemoreceptor glutamine deamidase CheD 1 (234 aa).

A disordered region spans residues 183-234 (AREAAGPRGERAARARPRVELFGTPAPKAQATPRIELFGTRATQPATRKQEA). Over residues 190–201 (RGERAARARPRV) the composition is skewed to basic and acidic residues. The segment covering 223–234 (RATQPATRKQEA) has biased composition (polar residues).

It belongs to the CheD family.

It catalyses the reaction L-glutaminyl-[protein] + H2O = L-glutamyl-[protein] + NH4(+). Its function is as follows. Probably deamidates glutamine residues to glutamate on methyl-accepting chemotaxis receptors (MCPs), playing an important role in chemotaxis. The sequence is that of Probable chemoreceptor glutamine deamidase CheD 1 from Burkholderia thailandensis (strain ATCC 700388 / DSM 13276 / CCUG 48851 / CIP 106301 / E264).